A 482-amino-acid chain; its full sequence is ATP synthase subunit beta (482 aa).

162–169 contributes to the ATP binding site; that stretch reads GGAGVGKT.

It belongs to the ATPase alpha/beta chains family. In terms of assembly, F-type ATPases have 2 components, CF(1) - the catalytic core - and CF(0) - the membrane proton channel. CF(1) has five subunits: alpha(3), beta(3), gamma(1), delta(1), epsilon(1). CF(0) has four main subunits: a(1), b(1), b'(1) and c(9-12).

The protein localises to the cellular thylakoid membrane. The enzyme catalyses ATP + H2O + 4 H(+)(in) = ADP + phosphate + 5 H(+)(out). Produces ATP from ADP in the presence of a proton gradient across the membrane. The catalytic sites are hosted primarily by the beta subunits. The protein is ATP synthase subunit beta of Synechococcus sp. (strain PCC 6716).